An 830-amino-acid chain; its full sequence is Penicillin-binding protein 1A (830 aa).

Residues 1 to 17 (MTERKREHKDRKQKKNS) are compositionally biased toward basic residues. The segment at 1-20 (MTERKREHKDRKQKKNSPKN) is disordered. The Cytoplasmic portion of the chain corresponds to 1–30 (MTERKREHKDRKQKKNSPKNQSKVTKFLKW). Residues 31-51 (FFIGILLLGITAVTVVGIYVL) traverse the membrane as a helical; Signal-anchor for type II membrane protein segment. The Extracellular portion of the chain corresponds to 52–830 (SIIRSSPELD…QNGQNNNITQ (779 aa)). Positions 72 to 244 (SILYDDQGNF…PTSYDGLSEA (173 aa)) are transglycosylase. The Proton donor; for transglycosylase activity role is filled by Glu111. The transpeptidase stretch occupies residues 378–663 (ASATIIDYKT…TSPIFGKIMG (286 aa)). The active-site Acyl-ester intermediate; for transpeptidase activity is the Ser417. Positions 731–830 (APDTNDNNNS…QNGQNNNITQ (100 aa)) are disordered. Low complexity predominate over residues 735 to 746 (NDNNNSGANEGN). Basic and acidic residues predominate over residues 747 to 758 (KQQETKPEEVKP). 2 stretches are compositionally biased toward low complexity: residues 759-807 (NENN…NTNN) and 816-830 (GNNQ…NITQ).

In the N-terminal section; belongs to the glycosyltransferase 51 family. The protein in the C-terminal section; belongs to the transpeptidase family.

It is found in the cell membrane. It carries out the reaction [GlcNAc-(1-&gt;4)-Mur2Ac(oyl-L-Ala-gamma-D-Glu-L-Lys-D-Ala-D-Ala)](n)-di-trans,octa-cis-undecaprenyl diphosphate + beta-D-GlcNAc-(1-&gt;4)-Mur2Ac(oyl-L-Ala-gamma-D-Glu-L-Lys-D-Ala-D-Ala)-di-trans,octa-cis-undecaprenyl diphosphate = [GlcNAc-(1-&gt;4)-Mur2Ac(oyl-L-Ala-gamma-D-Glu-L-Lys-D-Ala-D-Ala)](n+1)-di-trans,octa-cis-undecaprenyl diphosphate + di-trans,octa-cis-undecaprenyl diphosphate + H(+). The catalysed reaction is Preferential cleavage: (Ac)2-L-Lys-D-Ala-|-D-Ala. Also transpeptidation of peptidyl-alanyl moieties that are N-acyl substituents of D-alanine.. Its pathway is cell wall biogenesis; peptidoglycan biosynthesis. Cell wall formation. Synthesis of cross-linked peptidoglycan from the lipid intermediates. The enzyme has a penicillin-insensitive transglycosylase N-terminal domain (formation of linear glycan strands) and a penicillin-sensitive transpeptidase C-terminal domain (cross-linking of the peptide subunits). This chain is Penicillin-binding protein 1A (pbpA), found in Clostridium perfringens (strain ATCC 13124 / DSM 756 / JCM 1290 / NCIMB 6125 / NCTC 8237 / Type A).